The primary structure comprises 422 residues: UDP-N-acetylglucosamine 1-carboxyvinyltransferase (422 aa).

22–23 contributes to the phosphoenolpyruvate binding site; the sequence is KN. A UDP-N-acetyl-alpha-D-glucosamine-binding site is contributed by Arg93. Cys117 acts as the Proton donor in catalysis. Cys117 carries the 2-(S-cysteinyl)pyruvic acid O-phosphothioketal modification. UDP-N-acetyl-alpha-D-glucosamine contacts are provided by residues 122–126, Asp308, and Leu330; that span reads RPVDL.

Belongs to the EPSP synthase family. MurA subfamily.

Its subcellular location is the cytoplasm. The catalysed reaction is phosphoenolpyruvate + UDP-N-acetyl-alpha-D-glucosamine = UDP-N-acetyl-3-O-(1-carboxyvinyl)-alpha-D-glucosamine + phosphate. It participates in cell wall biogenesis; peptidoglycan biosynthesis. In terms of biological role, cell wall formation. Adds enolpyruvyl to UDP-N-acetylglucosamine. The chain is UDP-N-acetylglucosamine 1-carboxyvinyltransferase from Helicobacter acinonychis (strain Sheeba).